The primary structure comprises 1197 residues: MKKNNTILYYGCAAQARYASSNHGLLYSPSQAHLFNFSLARTYLNFSNGFRAFSSERKRQNSWKLSVRSIYMDSVNFTKHDFINALLKNFKQGNVYTVLVKVEYLDSSGNRAWCMLNVQKGIIYRNKSDFIELVKEFFDEVYIGYIEYMSRYHAQEVLSIQIMYILNNDSYRQYSLKNINKEKLDKNLVNVKQTKLDFSESLLPLTTNEKFYGKRLTPILDYKKQFVTSLYINGINFIKLVNKKSKDLNQEFINFDSKTRFYRYKLNEIEYIITVSNISKTETVKTIYLMTGFKFKDNILDKELTTKIFSRQIGNTTIEFDGADIINKEIKLKLPIIRLNYKPFTDLNSRIGTFDLETFRDYNSNSAVYALGFSTLSMSKTDKKTSMYYLTKDGNTSHEIIIKCINEMLSSDYRDHIYFTHNLGGYDIIFILHALKLENKIILENKLKGINTIVEDDKKIKVKKKKPISDVNKKSQNKDHYEISTILRDDRILKCVIKVKTPSGYNKITFIDSYNILPDKLDNLAKSFGTEIQKGLFPYEFVKSNTLNYVGITPSIEYYKINNEVISQELYNELIVPQWDLRKQTLHYLERDLLSLLEIINTYNHYVYKRYNVQLTESLTIARLALNIYLKRYLGDNLIPVVLNNSLFTSIKAAYYGGVAEVYRPYGKNLRYYDVNSLYPFVAKNTMPGHECKYIESKKGLKLSELFGFFYCKVTTNNQYLGLLPVHNQGLIMPNGQWYGWYFSEELKFAEVNGYNIEVIKGYQFNKIDNLFSSYVDDLYKIKANSEGSEKLITKFLLNSLLGRFGMSIFKLKTDIVSVEKAKKLAVTNYINSVKAISDTDVLISYNKEISRKLVEEHGLNYIEILNSNSKLDLEKNNSFKDVAVSISAAVTAYARIFMAQTKLDILKNGGNLYYTDTDSIVTDIDLPDNLVGSELGQFKLEFKLKEGFFISAKTYCLILEKEYIKKNKNKDTVIKAKGVFKTSLDVEKFKSLYFNKQDVEAIKSNNKTNYLEGYVNIESGIVKLKHDAYTKRSKIYDNNGLWIDTKPLNYQVSNMLEDTNSKPLNSPNNNDLCALIKYNKPCFDLIKYNKSITDLILYLPTNKAKFINYAQLESMINEAIHESDMRVANHIKMLIYSLTGILYHGKDGTMYIYSPNSKKIYIKYKKNNKWVTFWNIKYHNGYVYIKNKNKFYLYKG.

It belongs to the DNA polymerase type-B family.

It is found in the mitochondrion. It catalyses the reaction DNA(n) + a 2'-deoxyribonucleoside 5'-triphosphate = DNA(n+1) + diphosphate. The protein is Probable DNA polymerase of Podospora anserina (Pleurage anserina).